The primary structure comprises 379 residues: Succinyl-diaminopimelate desuccinylase (379 aa).

Residue H70 coordinates Zn(2+). The active site involves D72. D103 contacts Zn(2+). Residue E137 is the Proton acceptor of the active site. The Zn(2+) site is built by E138, E166, and H352.

Belongs to the peptidase M20A family. DapE subfamily. In terms of assembly, homodimer. It depends on Zn(2+) as a cofactor. Requires Co(2+) as cofactor.

The catalysed reaction is N-succinyl-(2S,6S)-2,6-diaminopimelate + H2O = (2S,6S)-2,6-diaminopimelate + succinate. It participates in amino-acid biosynthesis; L-lysine biosynthesis via DAP pathway; LL-2,6-diaminopimelate from (S)-tetrahydrodipicolinate (succinylase route): step 3/3. Functionally, catalyzes the hydrolysis of N-succinyl-L,L-diaminopimelic acid (SDAP), forming succinate and LL-2,6-diaminopimelate (DAP), an intermediate involved in the bacterial biosynthesis of lysine and meso-diaminopimelic acid, an essential component of bacterial cell walls. This chain is Succinyl-diaminopimelate desuccinylase, found in Shewanella baltica (strain OS195).